The sequence spans 333 residues: Antimicrobial peptides (333 aa).

Positions 1–23 (MVQKGVVFGVLLILFICSTLTSA) are cleaved as a signal peptide. Residues 23-52 (ADSKPNPTKEEEPAKKPDEVSVKSGGPEVS) are disordered. Residues 24-54 (DSKPNPTKEEEPAKKPDEVSVKSGGPEVSED) constitute a propeptide, acidic peptide 1. A compositionally biased stretch (basic and acidic residues) spans 29-43 (PTKEEEPAKKPDEVS). Residue Gln55 is modified to Pyrrolidone carboxylic acid. 2 disulfides stabilise this stretch: Cys60–Cys70 and Cys61–Cys74. A propeptide spans 75–102 (ANAEEAAAAIPEASEELAQEEAPVYSED) (acidic peptide 2). Position 103 is a pyrrolidone carboxylic acid (Gln103). Intrachain disulfides connect Cys108/Cys118 and Cys109/Cys122. The propeptide at 123–148 (QNAEEAAAAIPEATEKAQEAPVYSED) is acidic peptide 3. Residue Gln149 is modified to Pyrrolidone carboxylic acid. 2 cysteine pairs are disulfide-bonded: Cys154–Cys164 and Cys155–Cys168. Positions 169–196 (QNAEEAAAAVAIPEASEKAQEGPVYSED) are cleaved as a propeptide — acidic peptide 4. The residue at position 197 (Gln197) is a Pyrrolidone carboxylic acid. 2 cysteine pairs are disulfide-bonded: Cys202–Cys212 and Cys203–Cys216. Residues 217–232 (SNAADEVATPEDVEPG) constitute a propeptide, acidic peptide 5. The residue at position 233 (Gln233) is a Pyrrolidone carboxylic acid. 2 disulfide bridges follow: Cys238-Cys248 and Cys239-Cys252. Residues 253-278 (HNAAEEATLKAFEEEAAREQPVYSED) constitute a propeptide, acidic peptide 6. Gln279 carries the pyrrolidone carboxylic acid modification. 2 cysteine pairs are disulfide-bonded: Cys284-Cys294 and Cys285-Cys298. The propeptide at 299–333 (QSAEEAAAFQAGEVTASLMLIMFKACPCMGPVPSV) is acidic peptide 7.

In terms of processing, the N-terminal of all peptides are blocked. The 4 cysteine residues of all peptides are involved in intrachain disulfide bonds.

It is found in the secreted. In terms of biological role, plays a role in the defense of the germinating seed against microorganisms, by inhibiting the growth of a range of filamentous fungi and bacteria, especially Gram-positive bacteria. Not cytotoxic for cultured human cells and are the smallest known plant-derived antimicrobial peptides. Peptide IB-AMP4 has a higher antifungal activity than IB-AMP1. This is Antimicrobial peptides (AMP) from Impatiens balsamina (Balsam).